We begin with the raw amino-acid sequence, 309 residues long: GTP cyclohydrolase MptA 2 (309 aa).

This sequence belongs to the GTP cyclohydrolase IV family. Homodimer. Fe(2+) serves as cofactor.

The enzyme catalyses GTP + H2O = 7,8-dihydroneopterin 2',3'-cyclic phosphate + formate + diphosphate + H(+). It participates in cofactor biosynthesis; 5,6,7,8-tetrahydromethanopterin biosynthesis. Its function is as follows. Converts GTP to 7,8-dihydro-D-neopterin 2',3'-cyclic phosphate, the first intermediate in the biosynthesis of coenzyme methanopterin. The chain is GTP cyclohydrolase MptA 2 from Methanocella arvoryzae (strain DSM 22066 / NBRC 105507 / MRE50).